Consider the following 208-residue polypeptide: Proheparin-binding EGF-like growth factor (208 aa).

Positions Met1 to Gly23 are cleaved as a signal peptide. A propeptide spanning residues Glu24–Leu62 is cleaved from the precursor. The Extracellular segment spans residues Glu24 to Thr161. The span at Thr37 to Gln49 shows a compositional bias: polar residues. Disordered stretches follow at residues Thr37–Arg57 and Gln81–Lys104. O-linked (GalNAc...) threonine glycosylation occurs at Thr85. The span at Lys93 to Gly102 shows a compositional bias: basic residues. One can recognise an EGF-like domain in the interval Lys104–His144. 3 cysteine pairs are disulfide-bonded: Cys108–Cys121, Cys116–Cys132, and Cys134–Cys143. A propeptide spans Pro149 to His208 (C-terminal). The helical transmembrane segment at Ile162 to Leu182 threads the bilayer. Over Met183–His208 the chain is Cytoplasmic.

In terms of assembly, interacts with FBLN1. Interacts with EGFR and ERBB4. In terms of processing, O-glycosylated. As to expression, macrophages, midbrain, cerebellum, hypothalamus, cerebral cortex, bulbourethral gland, lung, heart ventricle, kidney, skin, prostate, seminal vesicle, testis; at low levels in lymph node, thymus, spleen; not detected in pituitary, olfactory bulb, thyroid, duodenum, pancreas, liver, submaxillary gland.

It localises to the secreted. The protein resides in the extracellular space. It is found in the cell membrane. Its function is as follows. Growth factor that mediates its effects via EGFR, ERBB2 and ERBB4. Required for normal cardiac valve formation and normal heart function. Promotes smooth muscle cell proliferation. May be involved in macrophage-mediated cellular proliferation. It is mitogenic for fibroblasts, but not endothelial cells. It is able to bind EGF receptor/EGFR with higher affinity than EGF itself and is a far more potent mitogen for smooth muscle cells than EGF. Also acts as a diphtheria toxin receptor. In Sus scrofa (Pig), this protein is Proheparin-binding EGF-like growth factor (HBEGF).